We begin with the raw amino-acid sequence, 63 residues long: MSKICEICGKGPSFGNNVSHANNKTSRIWYPNLQKIKAVKNGTVRSIKVCTRCIRSGHVTKAL.

It belongs to the bacterial ribosomal protein bL28 family.

This chain is Large ribosomal subunit protein bL28, found in Geotalea uraniireducens (strain Rf4) (Geobacter uraniireducens).